We begin with the raw amino-acid sequence, 529 residues long: Type I restriction enzyme EcoKI methylase subunit (529 aa).

Residues 148-153, 178-180, and Glu216 contribute to the S-adenosyl-L-methionine site; these read QYFTPR and TAG.

The protein belongs to the N(4)/N(6)-methyltransferase family. As to quaternary structure, the type I restriction/modification system is composed of three polypeptides R, M and S. The restriction enzyme has stoichiometry R(2)M(2)S(1). The methyltransferase is composed of M(2)S(1). In terms of assembly, (Microbial infection) Interacts with Escherichia phage T7 protein Ocr; this interaction leads to the inhibition of the methyltransferase restriction enzyme M.EcoKI composed of M(2)S(1).

The catalysed reaction is a 2'-deoxyadenosine in DNA + S-adenosyl-L-methionine = an N(6)-methyl-2'-deoxyadenosine in DNA + S-adenosyl-L-homocysteine + H(+). In terms of biological role, the subtype gamma methyltransferase (M) subunit of a type I restriction enzyme. The M and S subunits together form a methyltransferase (MTase) that methylates A-2 on the top and A-3 on the bottom strand of the sequence 5'-AACN(6)GTGC-3'. In the presence of the R subunit the complex can also act as an endonuclease, binding to the same target sequence but cutting the DNA some distance from this site. Whether the DNA is cut or modified depends on the methylation state of the target sequence. When the target site is unmodified, the DNA is cut. When the target site is hemimethylated, the complex acts as a maintenance MTase modifying the DNA so that both strands become methylated. After locating a non-methylated recognition site, the enzyme complex serves as a molecular motor that translocates DNA in an ATP-dependent manner until a collision occurs that triggers cleavage. The sequence is that of Type I restriction enzyme EcoKI methylase subunit from Escherichia coli (strain K12).